A 71-amino-acid polypeptide reads, in one-letter code: ATP synthase subunit c (71 aa).

Helical transmembrane passes span 5-25 (GAAI…AIIV) and 47-67 (FIGV…GFLI).

The protein belongs to the ATPase C chain family. In terms of assembly, F-type ATPases have 2 components, F(1) - the catalytic core - and F(0) - the membrane proton channel. F(1) has five subunits: alpha(3), beta(3), gamma(1), delta(1), epsilon(1). F(0) has three main subunits: a(1), b(2) and c(10-14). The alpha and beta chains form an alternating ring which encloses part of the gamma chain. F(1) is attached to F(0) by a central stalk formed by the gamma and epsilon chains, while a peripheral stalk is formed by the delta and b chains.

It is found in the cell membrane. Its function is as follows. F(1)F(0) ATP synthase produces ATP from ADP in the presence of a proton or sodium gradient. F-type ATPases consist of two structural domains, F(1) containing the extramembraneous catalytic core and F(0) containing the membrane proton channel, linked together by a central stalk and a peripheral stalk. During catalysis, ATP synthesis in the catalytic domain of F(1) is coupled via a rotary mechanism of the central stalk subunits to proton translocation. In terms of biological role, key component of the F(0) channel; it plays a direct role in translocation across the membrane. A homomeric c-ring of between 10-14 subunits forms the central stalk rotor element with the F(1) delta and epsilon subunits. The polypeptide is ATP synthase subunit c (Alkalihalobacillus alcalophilus (Bacillus alcalophilus)).